A 187-amino-acid polypeptide reads, in one-letter code: Large ribosomal subunit protein eL18B (187 aa).

Residue Thr134 is modified to Phosphothreonine. Ser136 is modified (phosphoserine).

This sequence belongs to the eukaryotic ribosomal protein eL18 family. As to quaternary structure, component of the large ribosomal subunit (LSU). Mature yeast ribosomes consist of a small (40S) and a large (60S) subunit. The 40S small subunit contains 1 molecule of ribosomal RNA (18S rRNA) and at least 33 different proteins. The large 60S subunit contains 3 rRNA molecules (25S, 5.8S and 5S rRNA) and at least 46 different proteins. eL18 interacts with NAP1.

The protein resides in the cytoplasm. Its function is as follows. Component of the ribosome, a large ribonucleoprotein complex responsible for the synthesis of proteins in the cell. The small ribosomal subunit (SSU) binds messenger RNAs (mRNAs) and translates the encoded message by selecting cognate aminoacyl-transfer RNA (tRNA) molecules. The large subunit (LSU) contains the ribosomal catalytic site termed the peptidyl transferase center (PTC), which catalyzes the formation of peptide bonds, thereby polymerizing the amino acids delivered by tRNAs into a polypeptide chain. The nascent polypeptides leave the ribosome through a tunnel in the LSU and interact with protein factors that function in enzymatic processing, targeting, and the membrane insertion of nascent chains at the exit of the ribosomal tunnel. The polypeptide is Large ribosomal subunit protein eL18B (rpl1802) (Schizosaccharomyces pombe (strain 972 / ATCC 24843) (Fission yeast)).